Consider the following 284-residue polypeptide: 2-dehydro-3-deoxyphosphooctonate aldolase (284 aa).

The protein belongs to the KdsA family.

It is found in the cytoplasm. It catalyses the reaction D-arabinose 5-phosphate + phosphoenolpyruvate + H2O = 3-deoxy-alpha-D-manno-2-octulosonate-8-phosphate + phosphate. The protein operates within carbohydrate biosynthesis; 3-deoxy-D-manno-octulosonate biosynthesis; 3-deoxy-D-manno-octulosonate from D-ribulose 5-phosphate: step 2/3. It functions in the pathway bacterial outer membrane biogenesis; lipopolysaccharide biosynthesis. The chain is 2-dehydro-3-deoxyphosphooctonate aldolase from Bordetella petrii (strain ATCC BAA-461 / DSM 12804 / CCUG 43448).